Consider the following 634-residue polypeptide: Protection of telomeres protein 1 (634 aa).

It belongs to the telombin family. Homodimer or homooligomer. Component of the shelterin complex (telosome) composed of TERF1, TERF2, TINF2, TERF2IP, ACD and POT1. Binds single-stranded telomeric DNA as a monomer. Associated component of the telomerase holoenzyme complex. Found in a complex with TERF1, TINF2 and TNKS1. Interacts with TNKS1. Forms heterodimers with ACD. Identified in a complex with ACD and single-stranded telomeric DNA.

It localises to the nucleus. The protein localises to the chromosome. It is found in the telomere. Component of the telomerase ribonucleoprotein (RNP) complex that is essential for the replication of chromosome termini. Is a component of the double-stranded telomeric DNA-binding TRF1 complex which is involved in the regulation of telomere length by cis-inhibition of telomerase. Also acts as a single-stranded telomeric DNA-binding protein and thus may act as a downstream effector of the TRF1 complex and may transduce information about telomere maintenance and/or length to the telomere terminus. Component of the shelterin complex (telosome) that is involved in the regulation of telomere length and protection. Shelterin associates with arrays of double-stranded TTAGGG repeats added by telomerase and protects chromosome ends; without its protective activity, telomeres are no longer hidden from the DNA damage surveillance and chromosome ends are inappropriately processed by DNA repair pathways. Binds to two or more telomeric single-stranded 5'-TTAGGG-3' repeats (G-strand) and with high specificity to a minimal telomeric single-stranded 5'-TAGGGTTAG-3' sequence. Binds telomeric single-stranded sequences internally or at proximity of a 3'-end. Its activity is TERT dependent but it does not increase TERT activity by itself. In contrast, the ACD-POT1 heterodimer enhances telomere elongation by increasing telomerase processivity. The chain is Protection of telomeres protein 1 (POT1) from Macaca fascicularis (Crab-eating macaque).